We begin with the raw amino-acid sequence, 613 residues long: AP-5 complex subunit mu (613 aa).

Positions K309–V563 constitute an MHD domain. The tract at residues S501 to E522 is disordered. Acidic residues predominate over residues G511–A521.

Belongs to the adaptor complexes medium subunit family. As to quaternary structure, probably part of the adaptor protein complex 5 (AP-5).

It localises to the cytoplasmic vesicle membrane. The protein is AP-5 complex subunit mu (AP5M) of Arabidopsis thaliana (Mouse-ear cress).